Reading from the N-terminus, the 1410-residue chain is ABC transporter C family member 13 (1410 aa).

8 helical membrane passes run 23 to 43, 60 to 80, 88 to 108, 122 to 142, 148 to 168, 391 to 411, 474 to 494, and 505 to 525; these read IVLGFGANVVTLLLILILTIT, LLYVTPALGACLSCVDLVLLV, VILCFVPLSGFVMWIAVILSL, ILCFWWIFRFLTDALHLNMIF, QEICLIMLDIAFGISINVLRI, LSGLAITILLIPVNKWISVLI, VFFWATTPTLFSLCTFGLFAL, and FTCLALFNSLISPLNSFPWVI. The ABC transmembrane type-1 1 domain occupies 255 to 530; sequence CNNYSTPSLI…FPWVINGLID (276 aa). In terms of domain architecture, ABC transporter 1 spans 564 to 791; it reads VCVEDASCTW…ISPTFSLTNE (228 aa). 602–609 is a binding site for ATP; it reads GEVGSGKT. The next 6 membrane-spanning stretches (helical) occupy residues 844 to 864, 889 to 909, 963 to 985, 990 to 1009, 1087 to 1107, and 1111 to 1131; these read AVFSGWFITIVILVSAVLMQG, TSFYLMVLCIFCIINSILTLV, SLPFILNILLANFVGLLGIIVVL, VLFLLLLLPFWYIYSKLQVF, IVLFVAVMAVLGSGGNFPISF, and GLVGLALSYAAPLVSLLGSLL. An ABC transmembrane type-1 2 domain is found at 852–1139; sequence TIVILVSAVL…LLTSFTETEK (288 aa). The ABC transporter 2 domain maps to 1174–1407; the sequence is VEFHNVTMRY…DSSTFSSFVR (234 aa). 1208-1215 contacts ATP; it reads GRTGAGKS.

This sequence belongs to the ABC transporter superfamily. ABCC family. Conjugate transporter (TC 3.A.1.208) subfamily. As to expression, ubiquitous.

It localises to the membrane. It carries out the reaction ATP + H2O + xenobioticSide 1 = ADP + phosphate + xenobioticSide 2.. Pump for glutathione S-conjugates. The chain is ABC transporter C family member 13 (ABCC13) from Arabidopsis thaliana (Mouse-ear cress).